Consider the following 161-residue polypeptide: Nucleotide-binding protein Rpic_2826 (161 aa).

Belongs to the YajQ family.

In terms of biological role, nucleotide-binding protein. In Ralstonia pickettii (strain 12J), this protein is Nucleotide-binding protein Rpic_2826.